Reading from the N-terminus, the 470-residue chain is Methylenetetrahydrofolate--tRNA-(uracil-5-)-methyltransferase TrmFO (470 aa).

Position 10-15 (10-15) interacts with FAD; sequence GAGLAG.

Belongs to the MnmG family. TrmFO subfamily. Requires FAD as cofactor.

It is found in the cytoplasm. It carries out the reaction uridine(54) in tRNA + (6R)-5,10-methylene-5,6,7,8-tetrahydrofolate + NADH + H(+) = 5-methyluridine(54) in tRNA + (6S)-5,6,7,8-tetrahydrofolate + NAD(+). It catalyses the reaction uridine(54) in tRNA + (6R)-5,10-methylene-5,6,7,8-tetrahydrofolate + NADPH + H(+) = 5-methyluridine(54) in tRNA + (6S)-5,6,7,8-tetrahydrofolate + NADP(+). Its function is as follows. Catalyzes the folate-dependent formation of 5-methyl-uridine at position 54 (M-5-U54) in all tRNAs. The polypeptide is Methylenetetrahydrofolate--tRNA-(uracil-5-)-methyltransferase TrmFO (Prochlorococcus marinus (strain MIT 9301)).